Here is a 145-residue protein sequence, read N- to C-terminus: Transcriptional regulator MraZ (145 aa).

SpoVT-AbrB domains are found at residues 5 to 50 (TFNH…ALPQ) and 81 to 124 (AHEV…DKAA).

It belongs to the MraZ family. As to quaternary structure, forms oligomers.

It is found in the cytoplasm. It localises to the nucleoid. The chain is Transcriptional regulator MraZ from Anaeromyxobacter sp. (strain Fw109-5).